Here is a 489-residue protein sequence, read N- to C-terminus: Phosphoglucosamine mutase (489 aa).

Ser-136 functions as the Phosphoserine intermediate in the catalytic mechanism. 4 residues coordinate Mg(2+): Ser-136, Asp-275, Asp-277, and Asp-279. Ser-136 carries the post-translational modification Phosphoserine.

Belongs to the phosphohexose mutase family. The cofactor is Mg(2+). In terms of processing, activated by phosphorylation.

It carries out the reaction alpha-D-glucosamine 1-phosphate = D-glucosamine 6-phosphate. Its function is as follows. Catalyzes the conversion of glucosamine-6-phosphate to glucosamine-1-phosphate. This is Phosphoglucosamine mutase from Trichodesmium erythraeum (strain IMS101).